The primary structure comprises 408 residues: Probable acyl-CoA dehydrogenase 6 (408 aa).

Catalysis depends on Glu-265, which acts as the Proton acceptor.

It belongs to the acyl-CoA dehydrogenase family. Homotetramer. Requires FAD as cofactor.

It carries out the reaction 3-methylbutanoyl-CoA + oxidized [electron-transfer flavoprotein] + H(+) = 3-methylbut-2-enoyl-CoA + reduced [electron-transfer flavoprotein]. It participates in amino-acid degradation; L-leucine degradation; (S)-3-hydroxy-3-methylglutaryl-CoA from 3-isovaleryl-CoA: step 1/3. The polypeptide is Probable acyl-CoA dehydrogenase 6 (acdh-6) (Caenorhabditis elegans).